Reading from the N-terminus, the 657-residue chain is C4-dicarboxylate transport sensor protein DctS (657 aa).

The Cytoplasmic portion of the chain corresponds to 1-26 (MRDTTGGPAGAEVWTVPGLLGARKLD). A helical membrane pass occupies residues 27-51 (LLALIPLVAIVALMTLVGALLFAVA). Residues 52 to 252 (QSDANRARAK…AYDAPDAFGN (201 aa)) lie on the Periplasmic side of the membrane. The chain crosses the membrane as a helical span at residues 253 to 273 (AALLAAIGALSVFAVLAMVVL). Residues 274-657 (HRNALRRRMA…LPVPQEGAPA (384 aa)) lie on the Cytoplasmic side of the membrane. Residues 289 to 361 (AEMAFRRAME…ARQRQLIEGQ (73 aa)) enclose the PAS domain. Residues 365–417 (QAFETRFRRSDGSEIEVQVFEAPLIDAGGRHRGWMGSVIDITQAKQAARLARA) form the PAC domain. The tract at residues 407-422 (QAKQAARLARAQDESL) is inter-domain linker. A Histidine kinase domain is found at 437 to 652 (TLAHELNQPL…VFTVTLPVPQ (216 aa)). His440 carries the phosphohistidine; by autocatalysis modification.

Its subcellular location is the cell inner membrane. It carries out the reaction ATP + protein L-histidine = ADP + protein N-phospho-L-histidine.. Its function is as follows. Member of the two-component regulatory system DctS/DctR involved in the transport of C4-dicarboxylates. DctS functions as a membrane-associated protein kinase that phosphorylates DctR in response to environmental signals. The protein is C4-dicarboxylate transport sensor protein DctS (dctS) of Rhodobacter capsulatus (Rhodopseudomonas capsulata).